The sequence spans 304 residues: PTB domain-containing engulfment adapter protein 1 (304 aa).

A Phosphothreonine modification is found at Thr16. Positions 21 to 176 constitute a PID domain; sequence SKHYIPYNAK…AGMQKRIQDL (156 aa). Residues 159-200 are a coiled coil; it reads DVETRKQIAGMQKRIQDLETENMELKNKVQDLESRLRTTQVS. Phosphoserine is present on Ser223.

The protein belongs to the ced-6 family. Homodimer. Interacts with clathrin and MEGF10. Interacts with GDP-bound ARF6, but not with GTP-bound ARF6. Part of a complex composed of GULP1, ACAP1 and ARF6. Interacts with ACAP1, LRP1 and STAB2. Detected throughout the brain, particularly in Purkinje cells, hippocampal and cortical neurons (at protein level).

The protein localises to the cytoplasm. Its function is as follows. Modulates cellular glycosphingolipid and cholesterol transport. May play a role in the internalization of various LRP1 ligands, such as PSAP. May function as an adapter protein. Required for efficient phagocytosis of apoptotic cells. Increases cellular levels of GTP-bound ARF6. The polypeptide is PTB domain-containing engulfment adapter protein 1 (Gulp1) (Mus musculus (Mouse)).